A 113-amino-acid chain; its full sequence is Large ribosomal subunit protein uL22 (113 aa).

The protein belongs to the universal ribosomal protein uL22 family. In terms of assembly, part of the 50S ribosomal subunit.

Its function is as follows. This protein binds specifically to 23S rRNA; its binding is stimulated by other ribosomal proteins, e.g. L4, L17, and L20. It is important during the early stages of 50S assembly. It makes multiple contacts with different domains of the 23S rRNA in the assembled 50S subunit and ribosome. Functionally, the globular domain of the protein is located near the polypeptide exit tunnel on the outside of the subunit, while an extended beta-hairpin is found that lines the wall of the exit tunnel in the center of the 70S ribosome. The chain is Large ribosomal subunit protein uL22 from Trichlorobacter lovleyi (strain ATCC BAA-1151 / DSM 17278 / SZ) (Geobacter lovleyi).